A 453-amino-acid chain; its full sequence is Zinc finger CCCH domain-containing protein 26 (453 aa).

Over residues 1-15 (MSETQQQVQNSTGSI) the composition is skewed to polar residues. Residues 1–47 (MSETQQQVQNSTGSIRSPDKIEDTFRRMKVNEDNMEQSSPYPDRPGE) form a disordered region. The residue at position 2 (Ser2) is an N-acetylserine. Residues 17–32 (SPDKIEDTFRRMKVNE) show a composition bias toward basic and acidic residues. 5 C3H1-type zinc fingers span residues 44 to 72 (RPGE…HPLT), 95 to 112 (ETGA…HPKD), 129 to 157 (RQGE…HPHP), 261 to 289 (FSER…HPKE), and 307 to 335 (RPGQ…HSML). The segment covering 360 to 379 (STNLRISSPPSPSDMTTLSN) has biased composition (polar residues). A disordered region spans residues 360 to 453 (STNLRISSPP…KVQDSSDKST (94 aa)). Positions 391–407 (ETEKQDDSPTEPEKSEV) are enriched in basic and acidic residues. The segment covering 413 to 422 (PNGSDSTSLP) has biased composition (polar residues). The span at 441 to 453 (DSSKVQDSSDKST) shows a compositional bias: basic and acidic residues.

Its subcellular location is the nucleus. The protein is Zinc finger CCCH domain-containing protein 26 (ZFN2) of Arabidopsis thaliana (Mouse-ear cress).